Reading from the N-terminus, the 444-residue chain is Histidinol dehydrogenase (444 aa).

Residues tyrosine 135, glutamine 199, and asparagine 227 each contribute to the NAD(+) site. Substrate contacts are provided by threonine 250, glutamine 272, and histidine 275. Positions 272 and 275 each coordinate Zn(2+). Residues glutamate 341 and histidine 342 each act as proton acceptor in the active site. Substrate is bound by residues histidine 342, aspartate 375, glutamate 429, and histidine 434. Position 375 (aspartate 375) interacts with Zn(2+). Histidine 434 serves as a coordination point for Zn(2+).

The protein belongs to the histidinol dehydrogenase family. The cofactor is Zn(2+).

The catalysed reaction is L-histidinol + 2 NAD(+) + H2O = L-histidine + 2 NADH + 3 H(+). The protein operates within amino-acid biosynthesis; L-histidine biosynthesis; L-histidine from 5-phospho-alpha-D-ribose 1-diphosphate: step 9/9. Catalyzes the sequential NAD-dependent oxidations of L-histidinol to L-histidinaldehyde and then to L-histidine. The chain is Histidinol dehydrogenase (hisD) from Mycobacterium bovis (strain ATCC BAA-935 / AF2122/97).